A 318-amino-acid polypeptide reads, in one-letter code: tRNA-cytidine(32) 2-sulfurtransferase (318 aa).

The disordered stretch occupies residues Met-1 to Asn-29. A compositionally biased stretch (polar residues) spans His-16–Gln-27. The short motif at Ser-64–Ser-69 is the PP-loop motif element. [4Fe-4S] cluster is bound by residues Cys-139, Cys-142, and Cys-230.

It belongs to the TtcA family. Homodimer. Mg(2+) is required as a cofactor. It depends on [4Fe-4S] cluster as a cofactor.

Its subcellular location is the cytoplasm. It carries out the reaction cytidine(32) in tRNA + S-sulfanyl-L-cysteinyl-[cysteine desulfurase] + AH2 + ATP = 2-thiocytidine(32) in tRNA + L-cysteinyl-[cysteine desulfurase] + A + AMP + diphosphate + H(+). Its pathway is tRNA modification. In terms of biological role, catalyzes the ATP-dependent 2-thiolation of cytidine in position 32 of tRNA, to form 2-thiocytidine (s(2)C32). The sulfur atoms are provided by the cysteine/cysteine desulfurase (IscS) system. This chain is tRNA-cytidine(32) 2-sulfurtransferase, found in Pseudoalteromonas atlantica (strain T6c / ATCC BAA-1087).